The sequence spans 117 residues: Probable non-functional immunoglobulin kappa variable 1D-42 (117 aa).

An N-terminal signal peptide occupies residues methionine 1–phenylalanine 22. The tract at residues aspartate 23–cysteine 45 is framework-1. The region spanning aspartate 23–proline 117 is the Ig-like domain. A disulfide bridge links cysteine 45 with cysteine 110. The interval tryptophan 46 to alanine 56 is complementarity-determining-1. Residues tryptophan 57–tyrosine 71 are framework-2. Residues aspartate 72–proline 78 are complementarity-determining-2. The framework-3 stretch occupies residues glycine 79 to cysteine 110. Residues lysine 111–proline 117 are complementarity-determining-3.

Immunoglobulins are composed of two identical heavy chains and two identical light chains; disulfide-linked.

It localises to the secreted. It is found in the cell membrane. Its function is as follows. Probable non-functional open reading frame (ORF) of V region of the variable domain of immunoglobulin light chains. Non-functional ORF generally cannot participate in the synthesis of a productive immunoglobulin chain due to altered V-(D)-J or switch recombination and/or splicing site (at mRNA level) and/or conserved amino acid change (protein level). Immunoglobulins, also known as antibodies, are membrane-bound or secreted glycoproteins produced by B lymphocytes. In the recognition phase of humoral immunity, the membrane-bound immunoglobulins serve as receptors which, upon binding of a specific antigen, trigger the clonal expansion and differentiation of B lymphocytes into immunoglobulins-secreting plasma cells. Secreted immunoglobulins mediate the effector phase of humoral immunity, which results in the elimination of bound antigens. The antigen binding site is formed by the variable domain of one heavy chain, together with that of its associated light chain. Thus, each immunoglobulin has two antigen binding sites with remarkable affinity for a particular antigen. The variable domains are assembled by a process called V-(D)-J rearrangement and can then be subjected to somatic hypermutations which, after exposure to antigen and selection, allow affinity maturation for a particular antigen. The polypeptide is Probable non-functional immunoglobulin kappa variable 1D-42 (Homo sapiens (Human)).